Here is a 107-residue protein sequence, read N- to C-terminus: MGGKTVTRADLAEAVYRKVGLSRTESAALVEMILDEVCDAIVNGETVKLSSFATFQVRDKNERIGRNPKTGEEVPILPRRVMTFKASNVLKQRILQEHQKRETKSQK.

Belongs to the bacterial histone-like protein family. Heterodimer of an alpha and a beta chain.

Its function is as follows. This protein is one of the two subunits of integration host factor, a specific DNA-binding protein that functions in genetic recombination as well as in transcriptional and translational control. The polypeptide is Integration host factor subunit alpha (Brucella anthropi (strain ATCC 49188 / DSM 6882 / CCUG 24695 / JCM 21032 / LMG 3331 / NBRC 15819 / NCTC 12168 / Alc 37) (Ochrobactrum anthropi)).